The sequence spans 392 residues: Chaperone protein DnaJ (392 aa).

The region spanning 2 to 67 (DYYTILGVAK…QKRESYDRYG (66 aa)) is the J domain. The CR-type zinc finger occupies 149 to 227 (GVEKELLVSG…CRGQGRIKDK (79 aa)). Residues Cys162, Cys165, Cys179, Cys182, Cys201, Cys204, Cys215, and Cys218 each coordinate Zn(2+). CXXCXGXG motif repeat units follow at residues 162-169 (CDACSGSG), 179-186 (CDRCKGSG), 201-208 (CPDCSGEG), and 215-222 (CSVCRGQG).

Belongs to the DnaJ family. In terms of assembly, homodimer. It depends on Zn(2+) as a cofactor.

It localises to the cytoplasm. Participates actively in the response to hyperosmotic and heat shock by preventing the aggregation of stress-denatured proteins and by disaggregating proteins, also in an autonomous, DnaK-independent fashion. Unfolded proteins bind initially to DnaJ; upon interaction with the DnaJ-bound protein, DnaK hydrolyzes its bound ATP, resulting in the formation of a stable complex. GrpE releases ADP from DnaK; ATP binding to DnaK triggers the release of the substrate protein, thus completing the reaction cycle. Several rounds of ATP-dependent interactions between DnaJ, DnaK and GrpE are required for fully efficient folding. Also involved, together with DnaK and GrpE, in the DNA replication of plasmids through activation of initiation proteins. This chain is Chaperone protein DnaJ, found in Chlamydia trachomatis serovar L2 (strain ATCC VR-902B / DSM 19102 / 434/Bu).